The following is a 252-amino-acid chain: Imidazole glycerol phosphate synthase subunit HisF (252 aa).

Residues Asp13 and Asp132 contribute to the active site.

This sequence belongs to the HisA/HisF family. As to quaternary structure, heterodimer of HisH and HisF.

Its subcellular location is the cytoplasm. The enzyme catalyses 5-[(5-phospho-1-deoxy-D-ribulos-1-ylimino)methylamino]-1-(5-phospho-beta-D-ribosyl)imidazole-4-carboxamide + L-glutamine = D-erythro-1-(imidazol-4-yl)glycerol 3-phosphate + 5-amino-1-(5-phospho-beta-D-ribosyl)imidazole-4-carboxamide + L-glutamate + H(+). The protein operates within amino-acid biosynthesis; L-histidine biosynthesis; L-histidine from 5-phospho-alpha-D-ribose 1-diphosphate: step 5/9. Its function is as follows. IGPS catalyzes the conversion of PRFAR and glutamine to IGP, AICAR and glutamate. The HisF subunit catalyzes the cyclization activity that produces IGP and AICAR from PRFAR using the ammonia provided by the HisH subunit. The protein is Imidazole glycerol phosphate synthase subunit HisF of Campylobacter curvus (strain 525.92).